Consider the following 44-residue polypeptide: Photosystem I reaction center subunit IX (44 aa).

A helical transmembrane segment spans residues 7–27 (YLSVAPVLSTLWFGSLAGLLI).

The protein belongs to the PsaJ family.

Its subcellular location is the plastid. The protein resides in the chloroplast thylakoid membrane. Its function is as follows. May help in the organization of the PsaE and PsaF subunits. This is Photosystem I reaction center subunit IX from Arabis hirsuta (Hairy rock-cress).